Here is a 449-residue protein sequence, read N- to C-terminus: Signal recognition particle protein (449 aa).

Residues 109–116 (GLQGSGKT), 191–195 (DTAGR), and 249–252 (SRID) contribute to the GTP site.

Belongs to the GTP-binding SRP family. SRP54 subfamily. Part of the signal recognition particle protein translocation system, which is composed of SRP and FtsY. SRP is a ribonucleoprotein composed of Ffh and a 4.5S RNA molecule.

It localises to the cytoplasm. The enzyme catalyses GTP + H2O = GDP + phosphate + H(+). Its function is as follows. Involved in targeting and insertion of nascent membrane proteins into the cytoplasmic membrane. Binds to the hydrophobic signal sequence of the ribosome-nascent chain (RNC) as it emerges from the ribosomes. The SRP-RNC complex is then targeted to the cytoplasmic membrane where it interacts with the SRP receptor FtsY. Interaction with FtsY leads to the transfer of the RNC complex to the Sec translocase for insertion into the membrane, the hydrolysis of GTP by both Ffh and FtsY, and the dissociation of the SRP-FtsY complex into the individual components. In Rickettsia conorii (strain ATCC VR-613 / Malish 7), this protein is Signal recognition particle protein.